A 204-amino-acid polypeptide reads, in one-letter code: MNPTERITTPHKTGEAKVIIFSAPSGSGKSTIINYLLAQKLNLAFSISATSRPPRGNEKHGVEYFFLSPDEFRQRIANNEFLEYEEVYTDRFYGTLKAQVEKQLAAGQNVVFDVDVVGGCNIKKYYGERALSLFIQPPCIDELRRRLIGRGTDTPEVIESRIAKAEYELSFAPKFDKVIINDDLETAKAHALKVIKEFLGIDTE.

Positions 16-196 constitute a Guanylate kinase-like domain; it reads AKVIIFSAPS…AKAHALKVIK (181 aa). 23–30 serves as a coordination point for ATP; that stretch reads APSGSGKS.

Belongs to the guanylate kinase family.

The protein localises to the cytoplasm. The enzyme catalyses GMP + ATP = GDP + ADP. Functionally, essential for recycling GMP and indirectly, cGMP. The chain is Guanylate kinase from Bacteroides fragilis (strain ATCC 25285 / DSM 2151 / CCUG 4856 / JCM 11019 / LMG 10263 / NCTC 9343 / Onslow / VPI 2553 / EN-2).